Consider the following 252-residue polypeptide: Type III pantothenate kinase (252 aa).

D6–K13 serves as a coordination point for ATP. Substrate contacts are provided by residues Y93 and G100–R103. The active-site Proton acceptor is D102. T126 is a binding site for ATP. Residue T179 participates in substrate binding.

It belongs to the type III pantothenate kinase family. As to quaternary structure, homodimer. Requires NH4(+) as cofactor. K(+) serves as cofactor.

Its subcellular location is the cytoplasm. It catalyses the reaction (R)-pantothenate + ATP = (R)-4'-phosphopantothenate + ADP + H(+). It participates in cofactor biosynthesis; coenzyme A biosynthesis; CoA from (R)-pantothenate: step 1/5. Functionally, catalyzes the phosphorylation of pantothenate (Pan), the first step in CoA biosynthesis. This Cellvibrio japonicus (strain Ueda107) (Pseudomonas fluorescens subsp. cellulosa) protein is Type III pantothenate kinase.